The sequence spans 412 residues: Protein MT3510 (412 aa).

K227 carries the N6-(pyridoxal phosphate)lysine modification.

The protein belongs to the DegT/DnrJ/EryC1 family.

The chain is Protein MT3510 from Mycobacterium tuberculosis (strain CDC 1551 / Oshkosh).